The chain runs to 273 residues: Cell wall mannoprotein 1 (273 aa).

An N-terminal signal peptide occupies residues 1-17 (MRFSAIFTLGLAGTALA). The disordered stretch occupies residues 173–247 (DVSDSAPSSS…GSASATSPPL (75 aa)). Positions 177–247 (SAPSSSAGSS…GSASATSPPL (71 aa)) are enriched in low complexity.

It belongs to the cell wall mannoprotein 1 family. Galactomannoprotein, glycosylated.

It localises to the secreted. It is found in the cell wall. In terms of biological role, constitutive protein of the cell wall. Antigen target of host humoral immune response. This Aspergillus flavus protein is Cell wall mannoprotein 1.